Here is a 900-residue protein sequence, read N- to C-terminus: Bifunctional uridylyltransferase/uridylyl-removing enzyme (900 aa).

Residues 1 to 342 form a uridylyltransferase region; it reads MPQVDPELFD…PCEQPVQIQP (342 aa). A uridylyl-removing region spans residues 343 to 705; the sequence is LNSRFQLRDG…TTQREFESGS (363 aa). One can recognise an HD domain in the interval 461–583; sequence VDAHTLNLIK…VGDQTHLDYL (123 aa). 2 ACT domains span residues 706 to 789 and 816 to 891; these read QIFI…IIQR and VLEV…DNGR.

The protein belongs to the GlnD family. The cofactor is Mg(2+).

The catalysed reaction is [protein-PII]-L-tyrosine + UTP = [protein-PII]-uridylyl-L-tyrosine + diphosphate. The enzyme catalyses [protein-PII]-uridylyl-L-tyrosine + H2O = [protein-PII]-L-tyrosine + UMP + H(+). With respect to regulation, uridylyltransferase (UTase) activity is inhibited by glutamine, while glutamine activates uridylyl-removing (UR) activity. Functionally, modifies, by uridylylation and deuridylylation, the PII regulatory proteins (GlnB and homologs), in response to the nitrogen status of the cell that GlnD senses through the glutamine level. Under low glutamine levels, catalyzes the conversion of the PII proteins and UTP to PII-UMP and PPi, while under higher glutamine levels, GlnD hydrolyzes PII-UMP to PII and UMP (deuridylylation). Thus, controls uridylylation state and activity of the PII proteins, and plays an important role in the regulation of nitrogen assimilation and metabolism. In Pseudomonas aeruginosa (strain LESB58), this protein is Bifunctional uridylyltransferase/uridylyl-removing enzyme.